Here is a 432-residue protein sequence, read N- to C-terminus: uncharacterized protein (432 aa).

2 SIS domains span residues 105 to 244 (WLTE…DLVS) and 277 to 422 (CDKK…VDLP).

This is an uncharacterized protein from Saccharomyces cerevisiae (strain ATCC 204508 / S288c) (Baker's yeast).